We begin with the raw amino-acid sequence, 367 residues long: B2 bradykinin receptor (367 aa).

Over 1–36 (MLNLTSQVPEPALNGTLPQSSSCFHSDWWNWLNTIQ) the chain is Extracellular. N-linked (GlcNAc...) asparagine glycosylation is found at Asn3 and Asn14. A helical membrane pass occupies residues 37–60 (APFLWVLFLLAALENIFVLSVFCL). Residues 61–69 (HKNSCTVAE) lie on the Cytoplasmic side of the membrane. The chain crosses the membrane as a helical span at residues 70-94 (IYLGNLAMADLILALGLPFWAITIA). Residues 95 to 107 (NHFDWLFGEVLCR) are Extracellular-facing. Residues Cys106 and Cys187 are joined by a disulfide bond. Residues 108–129 (VVNTMIYMNLYSSICFLMLVSI) form a helical membrane-spanning segment. At 130-151 (DRYLALVKTMSMGRMRGVRWAK) the chain is on the cytoplasmic side. Tyr132 carries the phosphotyrosine modification. The helical transmembrane segment at 152 to 174 (LYSLVIWGCTLLLSSPMLAFRTM) threads the bilayer. The Extracellular portion of the chain corresponds to 175–197 (HEYAAEGHNVTACIIKYPSRSWM). Residue Asn183 is glycosylated (N-linked (GlcNAc...) asparagine). A helical membrane pass occupies residues 198 to 224 (VFTNILLNSVGFLLPLSIITYCTVQIL). Over 225–243 (QVLRNNEMQKFKEIQTERK) the chain is Cytoplasmic. A helical transmembrane segment spans residues 244-268 (ATVLVLAVLLLFVVCWLPFQISTFL). The Extracellular portion of the chain corresponds to 269–287 (DTLLRLGVLSGCWDEHAVD). Residues 288 to 311 (VITQISSYVAYSNSGLNPLVYVIV) form a helical membrane-spanning segment. At 312 to 367 (GKRFRKKSREVYRVLCQKGGCMGEPVQMENSMGTLRTSISVERQIHKLQDWAGKKQ) the chain is on the cytoplasmic side. Position 323 is a phosphotyrosine (Tyr323). Residue Cys327 is the site of S-palmitoyl cysteine attachment. The residue at position 342 (Ser342) is a Phosphoserine. A Phosphothreonine modification is found at Thr345. Ser349 and Ser351 each carry phosphoserine; by GRK6.

This sequence belongs to the G-protein coupled receptor 1 family. Bradykinin receptor subfamily. BDKRB2 sub-subfamily. In terms of assembly, forms a complex with PECAM1 and GNAQ. Interacts with PECAM1.

It is found in the cell membrane. Functionally, receptor for bradykinin. It is associated with G proteins that activate a phosphatidylinositol-calcium second messenger system. The chain is B2 bradykinin receptor (BDKRB2) from Sus scrofa (Pig).